Reading from the N-terminus, the 247-residue chain is NCT transcriptional regulatory complex subunit A (247 aa).

Basic and acidic residues predominate over residues 1–12 (MTDQDSTYRPRS). 3 disordered regions span residues 1 to 31 (MTDQDSTYRPRSPDLSTFQSSIPPAVNSPIY), 48 to 82 (FFAPQYQQPPAPLGRVPQQYIPPFVDPNSPLSPDM), and 212 to 247 (VPDQPAGGRKHDDDGSDQNEQPKRKRGGRRPKDDSD). Positions 13–22 (PDLSTFQSSI) are enriched in polar residues.

The protein belongs to the NC2 alpha/DRAP1 family. As to quaternary structure, forms the NCT transcriptional regulatory complex with nctB and mot1.

It is found in the nucleus. Functionally, part of the NCT transcriptional regulatory complex that acts as a key regulator of ergosterol biosynthesis and the azole exporter cdr1B. The NCT complex binds the promoters of genes linked to azole susceptibility, and especially represses the expression of cdr1B transporter. The sequence is that of NCT transcriptional regulatory complex subunit A from Aspergillus fumigatus (strain CBS 144.89 / FGSC A1163 / CEA10) (Neosartorya fumigata).